The primary structure comprises 115 residues: Probable 4-amino-4-deoxy-L-arabinose-phosphoundecaprenol flippase subunit ArnE (115 aa).

The next 3 membrane-spanning stretches (helical) occupy residues 42–62 (PWPWLALLALGLGLLCWLLLL), 65–85 (VEVGSAYPMLALNFVLVTLAA), and 93–112 (VDRRHLAGLLLIVAGVVLLG). The EamA domain occupies 46–113 (LALLALGLGL…IVAGVVLLGR (68 aa)).

Belongs to the ArnE family. As to quaternary structure, heterodimer of ArnE and ArnF.

It localises to the cell inner membrane. It functions in the pathway bacterial outer membrane biogenesis; lipopolysaccharide biosynthesis. In terms of biological role, translocates 4-amino-4-deoxy-L-arabinose-phosphoundecaprenol (alpha-L-Ara4N-phosphoundecaprenol) from the cytoplasmic to the periplasmic side of the inner membrane. The sequence is that of Probable 4-amino-4-deoxy-L-arabinose-phosphoundecaprenol flippase subunit ArnE from Pseudomonas aeruginosa (strain UCBPP-PA14).